The sequence spans 200 residues: Protein GrpE (200 aa).

Belongs to the GrpE family. In terms of assembly, homodimer.

It is found in the cytoplasm. Participates actively in the response to hyperosmotic and heat shock by preventing the aggregation of stress-denatured proteins, in association with DnaK and GrpE. It is the nucleotide exchange factor for DnaK and may function as a thermosensor. Unfolded proteins bind initially to DnaJ; upon interaction with the DnaJ-bound protein, DnaK hydrolyzes its bound ATP, resulting in the formation of a stable complex. GrpE releases ADP from DnaK; ATP binding to DnaK triggers the release of the substrate protein, thus completing the reaction cycle. Several rounds of ATP-dependent interactions between DnaJ, DnaK and GrpE are required for fully efficient folding. The chain is Protein GrpE from Shewanella piezotolerans (strain WP3 / JCM 13877).